The primary structure comprises 359 residues: MTFDAASYTTQLNDKVARLRDLLAPFDAPEPQVFDSPLQNFRLRAEFRLWREAGERHYAMFSQDDKRTPILIEEFPIASQRINQLMPRLKAAWQASAPLSHKLFQVEFLTTLAGDAMITLCYHRPLDEHWHKAASQLAADLKVSVIGRSKGKREVIGQDYVVEKLEVGGRTFSYRQPEGAFTQPNGTVNQKMLNWAYEALGERQDDLLELYCGNGNFTLPLATRVRKVLATEISKTSVNAALSNLSENAVDNVTLVRLSAEELTEALNEVRPFRRLQGVDLKSYEFGSVFVDPPRAGMDPDTCELTRRFDNILYISCNPETLAANIAQLHDTHRITRCALFDQFPWTHHMESGVLLTRR.

S-adenosyl-L-methionine-binding residues include Gln183, Tyr211, Asn216, Glu232, and Asp292. Cys317 functions as the Nucleophile in the catalytic mechanism. Residue Glu351 is the Proton acceptor of the active site.

It belongs to the class I-like SAM-binding methyltransferase superfamily. RNA M5U methyltransferase family. TrmA subfamily.

It carries out the reaction uridine(54) in tRNA + S-adenosyl-L-methionine = 5-methyluridine(54) in tRNA + S-adenosyl-L-homocysteine + H(+). It catalyses the reaction uridine(341) in tmRNA + S-adenosyl-L-methionine = 5-methyluridine(341) in tmRNA + S-adenosyl-L-homocysteine + H(+). Its function is as follows. Dual-specificity methyltransferase that catalyzes the formation of 5-methyluridine at position 54 (m5U54) in all tRNAs, and that of position 341 (m5U341) in tmRNA (transfer-mRNA). In Pseudomonas fluorescens (strain ATCC BAA-477 / NRRL B-23932 / Pf-5), this protein is tRNA/tmRNA (uracil-C(5))-methyltransferase.